Consider the following 563-residue polypeptide: Kdo(2)-lipid A phosphoethanolamine 7''-transferase (563 aa).

The Cytoplasmic portion of the chain corresponds to 1–9; it reads MRYIKSITQ. The helical transmembrane segment at 10 to 30 threads the bilayer; sequence QKLSFLLAIYIGLFMNGAVFY. At 31–48 the chain is on the periplasmic side; that stretch reads RRFGSYAHDFTVWKGISA. The helical transmembrane segment at 49-69 threads the bilayer; the sequence is VVELAATVLVTFFLLRLLSLF. The Cytoplasmic portion of the chain corresponds to 70–79; that stretch reads GRRSWRILAS. Residues 80-100 form a helical membrane-spanning segment; that stretch reads LVVLFSAGASYYMTFLNVVIG. Topologically, residues 101–117 are periplasmic; it reads YGIIASVMTTDIDLSKE. A helical transmembrane segment spans residues 118–138; it reads VVGLNFILWLIAVSALPLILI. The Cytoplasmic portion of the chain corresponds to 139–159; it reads WNNRCRYTLLRQLRTPGQRIR. The helical transmembrane segment at 160 to 180 threads the bilayer; it reads SLAVVVLAGIMVWAPIRLLDI. Residues 181–563 lie on the Periplasmic side of the membrane; sequence QQKKVERATG…IPQAKEAAAN (383 aa).

The protein belongs to the phosphoethanolamine transferase family. EptB subfamily. The cofactor is Ca(2+).

It localises to the cell inner membrane. The catalysed reaction is alpha-Kdo-(2-&gt;4)-alpha-Kdo-(2-&gt;6)-lipid A (E. coli) + a 1,2-diacyl-sn-glycero-3-phosphoethanolamine = 7-O-[2-aminoethoxy(hydroxy)phosphoryl]-alpha-Kdo-(2-&gt;4)-alpha-Kdo-(2-&gt;6)-lipid A + a 1,2-diacyl-sn-glycerol. It catalyses the reaction alpha-Kdo-(2-&gt;4)-alpha-Kdo-(2-&gt;6)-lipid IVA (E. coli) + a 1,2-diacyl-sn-glycero-3-phosphoethanolamine = 7-O-[2-aminoethoxy(hydroxy)phosphoryl]-alpha-Kdo-(2-&gt;4)-alpha-Kdo-(2-&gt;6)-lipid IVA (E. coli) + a 1,2-diacyl-sn-glycerol. With respect to regulation, inhibited by calcium concentrations higher than 1 mM. Its function is as follows. Catalyzes the addition of a phosphoethanolamine (pEtN) moiety to the outer 3-deoxy-D-manno-octulosonic acid (Kdo) residue of a Kdo(2)-lipid A. Phosphatidylethanolamines with one unsaturated acyl group function as pEtN donors and the reaction releases diacylglycerol. This is Kdo(2)-lipid A phosphoethanolamine 7''-transferase (eptB) from Escherichia coli (strain K12).